The following is a 219-amino-acid chain: C-8 sterol isomerase erg2 (219 aa).

A helical membrane pass occupies residues 1 to 21 (MKLTKFLTVFIPFIAGLIYYI).

It belongs to the ERG2 family.

It is found in the endoplasmic reticulum membrane. It carries out the reaction fecosterol = episterol. Its pathway is steroid metabolism; ergosterol biosynthesis. C-8 sterol isomerase; part of the third module of ergosterol biosynthesis pathway that includes by the late steps of the pathway. Erg2 catalyzes the reaction which results in unsaturation at C-7 in the B ring of sterols and thus converts fecosterol to episterol. The third module or late pathway involves the ergosterol synthesis itself through consecutive reactions that mainly occur in the endoplasmic reticulum (ER) membrane. Firstly, the squalene synthase erg9 catalyzes the condensation of 2 farnesyl pyrophosphate moieties to form squalene, which is the precursor of all steroids. Secondly, squalene is converted into lanosterol by the consecutive action of the squalene epoxidase erg1 and the lanosterol synthase erg7. The lanosterol 14-alpha-demethylase erg11/cyp1 catalyzes C14-demethylation of lanosterol to produce 4,4'-dimethyl cholesta-8,14,24-triene-3-beta-ol. In the next steps, a complex process involving various demethylation, reduction and desaturation reactions catalyzed by the C-14 reductase erg24 and the C-4 demethylation complex erg25-erg26-erg27 leads to the production of zymosterol. Erg28 likely functions in the C-4 demethylation complex reaction by tethering erg26 and Erg27 to the endoplasmic reticulum or to facilitate interaction between these proteins. Then, the sterol 24-C-methyltransferase erg6 catalyzes the methyl transfer from S-adenosyl-methionine to the C-24 of zymosterol to form fecosterol. The C-8 sterol isomerase erg2 catalyzes the reaction which results in unsaturation at C-7 in the B ring of sterols and thus converts fecosterol to episterol. The sterol-C5-desaturases erg31 and erg32 then catalyze the introduction of a C-5 double bond in the B ring to produce 5-dehydroepisterol. The C-22 sterol desaturase erg5 further converts 5-dehydroepisterol into ergosta-5,7,22,24(28)-tetraen-3beta-ol by forming the C-22(23) double bond in the sterol side chain. Finally, ergosta-5,7,22,24(28)-tetraen-3beta-ol is substrate of the C-24(28) sterol reductase erg4 to produce ergosterol. In the genus Schizosaccharomyces, a second route exists between lanosterol and fecosterol, via the methylation of lanosterol to eburicol by erg6, followed by C14-demethylation by erg11/cyp1 and C4-demethylation by the demethylation complex erg25-erg26-erg27. In Schizosaccharomyces pombe (strain 972 / ATCC 24843) (Fission yeast), this protein is C-8 sterol isomerase erg2.